We begin with the raw amino-acid sequence, 435 residues long: Tungsten-containing formylmethanofuran dehydrogenase 2 subunit B (435 aa).

Sec121 is a non-standard amino acid (selenocysteine).

It belongs to the FwdB family. This enzyme is composed of six subunits FwdA, FwdC, FwdD, FwdE, FwdF and FwdG. Requires W-bis(molybdopterin guanine dinucleotide) as cofactor.

It catalyses the reaction N-formylmethanofuran + 2 oxidized [2Fe-2S]-[ferredoxin] + H2O = methanofuran + 2 reduced [2Fe-2S]-[ferredoxin] + CO2 + H(+). It participates in one-carbon metabolism; methanogenesis from CO(2); 5,10-methenyl-5,6,7,8-tetrahydromethanopterin from CO(2): step 1/3. Its function is as follows. Catalyzes the reversible oxidation of CO(2) and methanofuran (MFR) to N-formylmethanofuran (CHO-MFR). This enzyme is oxygen-labile. This Methanocaldococcus jannaschii (strain ATCC 43067 / DSM 2661 / JAL-1 / JCM 10045 / NBRC 100440) (Methanococcus jannaschii) protein is Tungsten-containing formylmethanofuran dehydrogenase 2 subunit B (fwdB).